Consider the following 411-residue polypeptide: Proline-responsive transcriptional activator PutR (411 aa).

Belongs to the CdaR family.

Functionally, activates transcription of the putBCP operon. Requires proline as a coactivator. The protein is Proline-responsive transcriptional activator PutR of Bacillus subtilis (strain 168).